Reading from the N-terminus, the 213-residue chain is Phosphoenolpyruvate guanylyltransferase (213 aa).

3 residues coordinate phosphoenolpyruvate: Thr-146, Gly-161, and Ser-164.

The protein belongs to the CofC family.

It catalyses the reaction phosphoenolpyruvate + GTP + H(+) = enolpyruvoyl-2-diphospho-5'-guanosine + diphosphate. Its pathway is cofactor biosynthesis; coenzyme F420 biosynthesis. In terms of biological role, guanylyltransferase that catalyzes the activation of phosphoenolpyruvate (PEP) as enolpyruvoyl-2-diphospho-5'-guanosine, via the condensation of PEP with GTP. It is involved in the biosynthesis of coenzyme F420, a hydride carrier cofactor. The polypeptide is Phosphoenolpyruvate guanylyltransferase (Mycolicibacterium vanbaalenii (strain DSM 7251 / JCM 13017 / BCRC 16820 / KCTC 9966 / NRRL B-24157 / PYR-1) (Mycobacterium vanbaalenii)).